Reading from the N-terminus, the 230-residue chain is Nucleoside diphosphate kinase 2, chloroplastic (230 aa).

The N-terminal 64 residues, 1-64 (MEAMAVFSGS…SYPKTFRTRS (64 aa)), are a transit peptide targeting the chloroplast. Lys-90, Phe-138, Arg-166, Thr-172, Arg-183, and Asn-193 together coordinate ATP. The active-site Pros-phosphohistidine intermediate is the His-196.

Belongs to the NDK family. Requires Mg(2+) as cofactor.

The protein resides in the plastid. It localises to the chloroplast. It catalyses the reaction a 2'-deoxyribonucleoside 5'-diphosphate + ATP = a 2'-deoxyribonucleoside 5'-triphosphate + ADP. The catalysed reaction is a ribonucleoside 5'-diphosphate + ATP = a ribonucleoside 5'-triphosphate + ADP. Major role in the synthesis of nucleoside triphosphates other than ATP. The ATP gamma phosphate is transferred to the NDP beta phosphate via a ping-pong mechanism, using a phosphorylated active-site intermediate. The sequence is that of Nucleoside diphosphate kinase 2, chloroplastic (NDPK2) from Pisum sativum (Garden pea).